The following is an 861-amino-acid chain: Translation initiation factor IF-2 (861 aa).

Residues 107 to 272 (AQKQQDIQRA…QRKKKSKVVQ (166 aa)) form a disordered region. Basic and acidic residues predominate over residues 115–128 (RAAEEAAAKERETE). Polar residues-rich tracts occupy residues 148-158 (SVQQEAANMDT) and 169-180 (VDESVSATTAGG). Positions 210–228 (NKEDSEVRREPADAEDLKR) are enriched in basic and acidic residues. Positions 260–269 (RARQRKKKSK) are enriched in basic residues. Residues 362-531 (SRAPVVSVMG…LLQSEMLELT (170 aa)) form the tr-type G domain. A G1 region spans residues 371–378 (GHVDHGKT). Residue 371–378 (GHVDHGKT) participates in GTP binding. The G2 stretch occupies residues 396–400 (GITQH). A G3 region spans residues 417-420 (DTPG). Residues 417–421 (DTPGH) and 471–474 (NKMD) contribute to the GTP site. The tract at residues 471-474 (NKMD) is G4. A G5 region spans residues 507-509 (SAH).

The protein belongs to the TRAFAC class translation factor GTPase superfamily. Classic translation factor GTPase family. IF-2 subfamily.

Its subcellular location is the cytoplasm. Its function is as follows. One of the essential components for the initiation of protein synthesis. Protects formylmethionyl-tRNA from spontaneous hydrolysis and promotes its binding to the 30S ribosomal subunits. Also involved in the hydrolysis of GTP during the formation of the 70S ribosomal complex. This chain is Translation initiation factor IF-2, found in Hahella chejuensis (strain KCTC 2396).